Consider the following 475-residue polypeptide: Aspartyl/glutamyl-tRNA(Asn/Gln) amidotransferase subunit B (475 aa).

Belongs to the GatB/GatE family. GatB subfamily. Heterotrimer of A, B and C subunits.

It carries out the reaction L-glutamyl-tRNA(Gln) + L-glutamine + ATP + H2O = L-glutaminyl-tRNA(Gln) + L-glutamate + ADP + phosphate + H(+). The catalysed reaction is L-aspartyl-tRNA(Asn) + L-glutamine + ATP + H2O = L-asparaginyl-tRNA(Asn) + L-glutamate + ADP + phosphate + 2 H(+). Functionally, allows the formation of correctly charged Asn-tRNA(Asn) or Gln-tRNA(Gln) through the transamidation of misacylated Asp-tRNA(Asn) or Glu-tRNA(Gln) in organisms which lack either or both of asparaginyl-tRNA or glutaminyl-tRNA synthetases. The reaction takes place in the presence of glutamine and ATP through an activated phospho-Asp-tRNA(Asn) or phospho-Glu-tRNA(Gln). This Bacillus cereus (strain ZK / E33L) protein is Aspartyl/glutamyl-tRNA(Asn/Gln) amidotransferase subunit B.